The primary structure comprises 325 residues: Malate dehydrogenase (325 aa).

Residue G11 to A17 coordinates NAD(+). Residues R92 and R98 each contribute to the substrate site. NAD(+) contacts are provided by residues N105, Q112, and V129–N131. The substrate site is built by N131 and R162. H187 serves as the catalytic Proton acceptor.

The protein belongs to the LDH/MDH superfamily. MDH type 2 family.

It carries out the reaction (S)-malate + NAD(+) = oxaloacetate + NADH + H(+). Functionally, catalyzes the reversible oxidation of malate to oxaloacetate. This Methylococcus capsulatus (strain ATCC 33009 / NCIMB 11132 / Bath) protein is Malate dehydrogenase.